A 246-amino-acid chain; its full sequence is Cell division protein ZapD (246 aa).

The protein belongs to the ZapD family. In terms of assembly, interacts with FtsZ.

It is found in the cytoplasm. Its function is as follows. Cell division factor that enhances FtsZ-ring assembly. Directly interacts with FtsZ and promotes bundling of FtsZ protofilaments, with a reduction in FtsZ GTPase activity. The chain is Cell division protein ZapD from Vibrio atlanticus (strain LGP32) (Vibrio splendidus (strain Mel32)).